A 488-amino-acid chain; its full sequence is Type II restriction enzyme HgaI (488 aa).

The enzyme catalyses Endonucleolytic cleavage of DNA to give specific double-stranded fragments with terminal 5'-phosphates.. Its function is as follows. An S subtype restriction enzyme that recognizes the double-stranded sequences 5'-GACGC-3' and 5'-GCGTC-3' and cleaves respectively 10 bases after G-1 and 10 bases before G'-1. The sequence is that of Type II restriction enzyme HgaI (hgaIR) from Avibacterium volantium (Pasteurella volantium).